The following is a 27-amino-acid chain: Caerulein precursor fragment R2 (27 aa).

As to expression, expressed by the skin glands.

It is found in the secreted. In terms of biological role, antimicrobial peptide. This is Caerulein precursor fragment R2 from Xenopus ruwenzoriensis (Uganda clawed frog).